Reading from the N-terminus, the 762-residue chain is Acyl-homoserine lactone acylase PvdQ (762 aa).

The signal sequence occupies residues methionine 1–alanine 23. Positions alanine 194 to glycine 216 are cleaved as a propeptide — spacer peptide. The Nucleophile role is filled by serine 217.

This sequence belongs to the peptidase S45 family. Heterodimer of an alpha subunit and a beta subunit processed from the same precursor.

The protein localises to the periplasm. It carries out the reaction an N-acyl-L-homoserine lactone + H2O = L-homoserine lactone + a carboxylate. In terms of biological role, catalyzes the deacylation of acyl-homoserine lactone (AHL or acyl-HSL), releasing homoserine lactone (HSL) and the corresponding fatty acid. Possesses a specificity for the degradation of long-chain acyl-HSLs (side chains of 11 to 14 carbons in length). Degrades 3-oxo-C12-HSL, one of the two main AHL signal molecules of P.aeruginosa, and thereby functions as a quorum quencher, inhibiting the las quorum-sensing system. Therefore, may enable P.aeruginosa to modulate its own quorum-sensing-dependent pathogenic potential. Also appears to be required for pyoverdin biosynthesis. In Pseudomonas aeruginosa (strain ATCC 15692 / DSM 22644 / CIP 104116 / JCM 14847 / LMG 12228 / 1C / PRS 101 / PAO1), this protein is Acyl-homoserine lactone acylase PvdQ (pvdQ).